A 737-amino-acid chain; its full sequence is Ribosome-releasing factor 2, mitochondrial (737 aa).

The transit peptide at 1–36 (MLCNRLHKAAFAARLRPRLPATVASCRQVHNSDGTI) directs the protein to the mitochondrion. In terms of domain architecture, tr-type G spans 39–318 (KRIRNIGILA…SVLNFLPAPS (280 aa)). GTP is bound by residues 48-55 (AHIDAGKT), 112-116 (DTPGH), and 166-169 (NKMD).

The protein belongs to the TRAFAC class translation factor GTPase superfamily. Classic translation factor GTPase family. EF-G/EF-2 subfamily.

Its subcellular location is the mitochondrion. Mitochondrial GTPase that mediates the disassembly of ribosomes from messenger RNA at the termination of mitochondrial protein biosynthesis. Not involved in the GTP-dependent ribosomal translocation step during translation elongation. This Anopheles gambiae (African malaria mosquito) protein is Ribosome-releasing factor 2, mitochondrial.